The chain runs to 413 residues: 1-deoxy-D-xylulose 5-phosphate reductoisomerase (413 aa).

Residues Thr21, Gly22, Ser23, Ile24, Gly47, and Asn127 each coordinate NADPH. Lys128 contributes to the 1-deoxy-D-xylulose 5-phosphate binding site. Residue Glu129 participates in NADPH binding. Asp151 is a Mn(2+) binding site. 1-deoxy-D-xylulose 5-phosphate contacts are provided by Ser152, Glu153, Ser177, and His200. Glu153 provides a ligand contact to Mn(2+). An NADPH-binding site is contributed by Gly206. Residues Ser213, Asn218, Lys219, and Glu222 each coordinate 1-deoxy-D-xylulose 5-phosphate. Position 222 (Glu222) interacts with Mn(2+).

It belongs to the DXR family. Mg(2+) is required as a cofactor. Requires Mn(2+) as cofactor.

It catalyses the reaction 2-C-methyl-D-erythritol 4-phosphate + NADP(+) = 1-deoxy-D-xylulose 5-phosphate + NADPH + H(+). The protein operates within isoprenoid biosynthesis; isopentenyl diphosphate biosynthesis via DXP pathway; isopentenyl diphosphate from 1-deoxy-D-xylulose 5-phosphate: step 1/6. Catalyzes the NADPH-dependent rearrangement and reduction of 1-deoxy-D-xylulose-5-phosphate (DXP) to 2-C-methyl-D-erythritol 4-phosphate (MEP). This Mycobacterium bovis (strain ATCC BAA-935 / AF2122/97) protein is 1-deoxy-D-xylulose 5-phosphate reductoisomerase.